Reading from the N-terminus, the 428-residue chain is Serine--tRNA ligase (428 aa).

L-serine is bound at residue 235–237; sequence TAE. 266–268 contacts ATP; the sequence is RSE. Position 289 (Glu289) interacts with L-serine. Residue 353 to 356 coordinates ATP; that stretch reads EISS. Ser389 contributes to the L-serine binding site.

It belongs to the class-II aminoacyl-tRNA synthetase family. Type-1 seryl-tRNA synthetase subfamily. Homodimer. The tRNA molecule binds across the dimer.

It localises to the cytoplasm. The enzyme catalyses tRNA(Ser) + L-serine + ATP = L-seryl-tRNA(Ser) + AMP + diphosphate + H(+). It carries out the reaction tRNA(Sec) + L-serine + ATP = L-seryl-tRNA(Sec) + AMP + diphosphate + H(+). The protein operates within aminoacyl-tRNA biosynthesis; selenocysteinyl-tRNA(Sec) biosynthesis; L-seryl-tRNA(Sec) from L-serine and tRNA(Sec): step 1/1. Catalyzes the attachment of serine to tRNA(Ser). Is also able to aminoacylate tRNA(Sec) with serine, to form the misacylated tRNA L-seryl-tRNA(Sec), which will be further converted into selenocysteinyl-tRNA(Sec). The chain is Serine--tRNA ligase from Shewanella frigidimarina (strain NCIMB 400).